The primary structure comprises 200 residues: Dephospho-CoA kinase (200 aa).

In terms of domain architecture, DPCK spans 4–200; sequence VIGLTGGIAS…VILKNWNIID (197 aa). Residue 12 to 17 coordinates ATP; the sequence is ASGKST.

It belongs to the CoaE family.

Its subcellular location is the cytoplasm. It carries out the reaction 3'-dephospho-CoA + ATP = ADP + CoA + H(+). The protein operates within cofactor biosynthesis; coenzyme A biosynthesis; CoA from (R)-pantothenate: step 5/5. Catalyzes the phosphorylation of the 3'-hydroxyl group of dephosphocoenzyme A to form coenzyme A. The chain is Dephospho-CoA kinase from Bacillus cereus (strain ATCC 10987 / NRS 248).